The chain runs to 147 residues: Cytochrome c' (147 aa).

The N-terminal stretch at 1–21 (MKRMMIVAALAALTTTTVAQA) is a signal peptide. Residues Arg-31, Thr-87, Glu-88, Cys-137, Cys-140, and His-141 each contribute to the heme c site.

In terms of assembly, homodimer. In terms of processing, binds 1 heme c group covalently per subunit.

Functionally, cytochrome c' is the most widely occurring bacterial c-type cytochrome. Cytochromes c' are high-spin proteins and the heme has no sixth ligand. Their exact function is not known. The polypeptide is Cytochrome c' (Rhodospirillum rubrum (strain ATCC 11170 / ATH 1.1.1 / DSM 467 / LMG 4362 / NCIMB 8255 / S1)).